We begin with the raw amino-acid sequence, 695 residues long: MSARRSAIFVNTTDTAVANLVVFEVPAGTAIGAAMRELDLPNKGPEAIVCAKDAEGQLKDLSHVPETTATFTAVPANTDDGRAVIRHSCAHVLAQAVQAEFPGTKLGIGPAIENGFYYDFDAAEPFTPEDLKTIEKRMKKIIKTGQKFERRVYESAEAAAEELKNEPYKLELIQDKGNVDPNSDEATEVGAGELTAYDNVNPRTSEVEWSDLCRGPHIPTTRYIPAFALTRSSAAYWRGDQDNAGLQRIYGTAWEDKESLDAYQTMLAEAEKRDHRRLGTELDLFSFPDDLGSGLPVFHPNGGIVRNEMEDHSRRRHIAAGYSFVNTPHITKQDLFERSGHLGFYKDGMFPPMQVDAEFDEDGNVTKPGQEYYLKPMNCPMHNLIFDSRGRSYRELPLRLFEFGNVYRYEKSGVIHGLTRARGFTQDDAHIYCTEDQLEAELTSVLDFILSLLRDYGLDDFYLELSTRDPKKSVGSDEIWERSTEILNRVATNSGLELVPDPEGAAFYGPKISVQARDAIGRTWQMSTVQLDFNMPERFNLEYTSSDGSKQQPIMIHRALFGSIERFFGVLLEHYAGAFPAWLAPHQVMGIPVADDCIPHLETITAQLREKGIRADVDTSDDRMQKKIRNHTTGKVPFMLLAGARDVEANAVSFRFLDGTQVNGVPVDEAIAVISSWIGDRINDQPSEDSIAARR.

Residues 6–75 enclose the TGS domain; sequence SAIFVNTTDT…ETTATFTAVP (70 aa). A catalytic region spans residues 274–580; it reads DHRRLGTELD…LLEHYAGAFP (307 aa). 3 residues coordinate Zn(2+): C379, H430, and H557.

Belongs to the class-II aminoacyl-tRNA synthetase family. Homodimer. Requires Zn(2+) as cofactor.

It is found in the cytoplasm. The catalysed reaction is tRNA(Thr) + L-threonine + ATP = L-threonyl-tRNA(Thr) + AMP + diphosphate + H(+). Its function is as follows. Catalyzes the attachment of threonine to tRNA(Thr) in a two-step reaction: L-threonine is first activated by ATP to form Thr-AMP and then transferred to the acceptor end of tRNA(Thr). Also edits incorrectly charged L-seryl-tRNA(Thr). The polypeptide is Threonine--tRNA ligase (Corynebacterium glutamicum (strain ATCC 13032 / DSM 20300 / JCM 1318 / BCRC 11384 / CCUG 27702 / LMG 3730 / NBRC 12168 / NCIMB 10025 / NRRL B-2784 / 534)).